Here is a 606-residue protein sequence, read N- to C-terminus: GTLANIIMLEHYIKLRRLKGKTYNVVSLDIRKAFDTVSHPAILRAMRAFGIDDGMQDFIMSTITDAYTNIVVGGRTTNKIYIRNGVKQGDPLSPVLFNIVLDELVTRLNDEQPGASMTPACKIASLAFADDLLLLEDRDIDVPNSLATTCAYFRTRGMTLNPEKCASISAATVSGRSVPRSKPSFTIDGRYIKPLGGINTFKYLGLTFSSTGVAKPTVYNLTRWLRNLEKAPLKPNQKFYILKTHLLPRLFYGLQSPGVTAGILQECDRLARRTTRKIFHLNVHTGSQFLHARIRDGGLGLVQMRYRIPCILSKRLGSLKQGNDTTNWSDIFNIEGPARSFYFRIRFLSSKGDPDPYWREEIRTRPLSSGLQDAADDASSRSWLNTIPRGWTGRDFVRAVQLRTGNLATQGLPYMAPEHRGCRNGCPRTESLSHVLQGCPLTHHERIKRHNELVAKVAKHARKKGWTTEVEPYVYHQDGQLYKPDLAIHQPDNTLVICDVQVCWEGPRPLATSWDNKRLVYDNPRFREAAVRRWGDKSLVFSPLLLGARGIWPRANVPTCNILSIPTTLRASCVHTCLKWGSTIHRHFMAGVWRRRPPDPPRPVPP.

Positions 1–208 (GTLANIIMLE…NTFKYLGLTF (208 aa)) constitute a Reverse transcriptase domain. The segment at 331-606 (IFNIEGPARS…PPDPPRPVPP (276 aa)) is nucleic acid-binding endonuclease.

It carries out the reaction DNA(n) + a 2'-deoxyribonucleoside 5'-triphosphate = DNA(n+1) + diphosphate. The sequence is that of Retrovirus-related Pol polyprotein from type-1 retrotransposable element R2 from Popillia japonica (Japanese beetle).